Here is a 460-residue protein sequence, read N- to C-terminus: Argininosuccinate lyase (460 aa).

Belongs to the lyase 1 family. Argininosuccinate lyase subfamily.

The protein localises to the cytoplasm. The enzyme catalyses 2-(N(omega)-L-arginino)succinate = fumarate + L-arginine. It functions in the pathway amino-acid biosynthesis; L-arginine biosynthesis; L-arginine from L-ornithine and carbamoyl phosphate: step 3/3. In Alkaliphilus metalliredigens (strain QYMF), this protein is Argininosuccinate lyase.